Here is a 1342-residue protein sequence, read N- to C-terminus: DNA-directed RNA polymerase subunit beta (1342 aa).

2 positions are modified to N6-acetyllysine: lysine 1022 and lysine 1200.

Belongs to the RNA polymerase beta chain family. As to quaternary structure, the RNAP catalytic core consists of 2 alpha, 1 beta, 1 beta' and 1 omega subunit. When a sigma factor is associated with the core the holoenzyme is formed, which can initiate transcription.

The enzyme catalyses RNA(n) + a ribonucleoside 5'-triphosphate = RNA(n+1) + diphosphate. Functionally, DNA-dependent RNA polymerase catalyzes the transcription of DNA into RNA using the four ribonucleoside triphosphates as substrates. This Escherichia coli O81 (strain ED1a) protein is DNA-directed RNA polymerase subunit beta.